Consider the following 340-residue polypeptide: Anthranilate phosphoribosyltransferase (340 aa).

Residues glycine 79, 82–83 (GD), threonine 87, 89–92 (NIST), 107–115 (KHGNRAVTG), and serine 119 contribute to the 5-phospho-alpha-D-ribose 1-diphosphate site. Residue glycine 79 participates in anthranilate binding. Serine 91 serves as a coordination point for Mg(2+). An anthranilate-binding site is contributed by asparagine 110. Position 165 (arginine 165) interacts with anthranilate. Aspartate 224 and glutamate 225 together coordinate Mg(2+).

This sequence belongs to the anthranilate phosphoribosyltransferase family. In terms of assembly, homodimer. Requires Mg(2+) as cofactor.

The catalysed reaction is N-(5-phospho-beta-D-ribosyl)anthranilate + diphosphate = 5-phospho-alpha-D-ribose 1-diphosphate + anthranilate. It functions in the pathway amino-acid biosynthesis; L-tryptophan biosynthesis; L-tryptophan from chorismate: step 2/5. Functionally, catalyzes the transfer of the phosphoribosyl group of 5-phosphorylribose-1-pyrophosphate (PRPP) to anthranilate to yield N-(5'-phosphoribosyl)-anthranilate (PRA). The sequence is that of Anthranilate phosphoribosyltransferase from Syntrophomonas wolfei subsp. wolfei (strain DSM 2245B / Goettingen).